The following is a 655-amino-acid chain: Putative esterase (655 aa).

Residues 9–29 (VLSLTLIYISISIGFSVYFYV) traverse the membrane as a helical segment. N-linked (GlcNAc...) asparagine; by host glycosylation is found at Asn71, Asn89, Asn101, Asn185, Asn386, Asn449, and Asn512. His515 serves as the catalytic Charge relay system. N-linked (GlcNAc...) asparagine; by host glycosylation is found at Asn527 and Asn597.

Belongs to the type-B carboxylesterase/lipase family.

It is found in the membrane. It carries out the reaction a carboxylic ester + H2O = an alcohol + a carboxylate + H(+). In Noctuidae (owlet moths), this protein is Putative esterase.